Reading from the N-terminus, the 473-residue chain is Lactate utilization protein B (473 aa).

4Fe-4S ferredoxin-type domains are found at residues 302–332 (GSEFRQVLQCIRCAACVNVCPVYRHVGGHSY) and 351–380 (YDDYKELPYASSLCGACTEACPVKIPLHDL). [4Fe-4S] cluster contacts are provided by Cys-311, Cys-314, Cys-317, Cys-321, Cys-364, Cys-367, and Cys-371.

This sequence belongs to the LutB/YkgF family.

In terms of biological role, is involved in L-lactate degradation and allows cells to grow with lactate as the sole carbon source. Has probably a role as an electron transporter during oxidation of L-lactate. This chain is Lactate utilization protein B, found in Bacillus anthracis (strain A0248).